Consider the following 148-residue polypeptide: 3-hydroxyacyl-[acyl-carrier-protein] dehydratase FabZ (148 aa).

Residue H55 is part of the active site.

Belongs to the thioester dehydratase family. FabZ subfamily.

The protein resides in the cytoplasm. The enzyme catalyses a (3R)-hydroxyacyl-[ACP] = a (2E)-enoyl-[ACP] + H2O. Its function is as follows. Involved in unsaturated fatty acids biosynthesis. Catalyzes the dehydration of short chain beta-hydroxyacyl-ACPs and long chain saturated and unsaturated beta-hydroxyacyl-ACPs. This is 3-hydroxyacyl-[acyl-carrier-protein] dehydratase FabZ from Haemophilus influenzae (strain 86-028NP).